The primary structure comprises 585 residues: Aspartate--tRNA(Asp/Asn) ligase (585 aa).

Glu-175 contributes to the L-aspartate binding site. Residues 199-202 (QLFK) form an aspartate region. Residue Arg-221 coordinates L-aspartate. Residues 221–223 (RDE) and Gln-230 contribute to the ATP site. Position 448 (His-448) interacts with L-aspartate. Residue Glu-482 participates in ATP binding. Residue Arg-489 coordinates L-aspartate. Residue 534 to 537 (GLDR) participates in ATP binding.

It belongs to the class-II aminoacyl-tRNA synthetase family. Type 1 subfamily. In terms of assembly, homodimer.

Its subcellular location is the cytoplasm. The enzyme catalyses tRNA(Asx) + L-aspartate + ATP = L-aspartyl-tRNA(Asx) + AMP + diphosphate. Functionally, aspartyl-tRNA synthetase with relaxed tRNA specificity since it is able to aspartylate not only its cognate tRNA(Asp) but also tRNA(Asn). Reaction proceeds in two steps: L-aspartate is first activated by ATP to form Asp-AMP and then transferred to the acceptor end of tRNA(Asp/Asn). The protein is Aspartate--tRNA(Asp/Asn) ligase of Natranaerobius thermophilus (strain ATCC BAA-1301 / DSM 18059 / JW/NM-WN-LF).